Consider the following 518-residue polypeptide: Dihydropyrimidinase 2 (518 aa).

3 residues coordinate Zn(2+): histidine 59, histidine 61, and lysine 152. Lysine 152 carries the post-translational modification N6-carboxylysine. Substrate is bound at residue tyrosine 157. Zn(2+) is bound by residues histidine 185 and histidine 241. Residue serine 291 participates in substrate binding. Residue aspartate 319 coordinates Zn(2+). Asparagine 340 contacts substrate.

This sequence belongs to the metallo-dependent hydrolases superfamily. Hydantoinase/dihydropyrimidinase family. As to quaternary structure, homotetramer. Requires Zn(2+) as cofactor. In terms of processing, carboxylation allows a single lysine to coordinate two zinc ions.

It carries out the reaction 5,6-dihydrouracil + H2O = 3-(carbamoylamino)propanoate + H(+). The chain is Dihydropyrimidinase 2 (dhp-2) from Caenorhabditis briggsae.